A 368-amino-acid polypeptide reads, in one-letter code: tRNA-specific 2-thiouridylase MnmA (368 aa).

ATP-binding positions include 11-18 (GMSGGVDS) and methionine 37. Residues 97–99 (NPD) form an interaction with target base in tRNA region. The active-site Nucleophile is cysteine 102. Cysteine 102 and cysteine 199 are oxidised to a cystine. Residue glycine 127 coordinates ATP. An interaction with tRNA region spans residues 149-151 (KDQ). The active-site Cysteine persulfide intermediate is cysteine 199. Residues 311–312 (RY) are interaction with tRNA.

Belongs to the MnmA/TRMU family. In terms of assembly, interacts with TusE.

The protein resides in the cytoplasm. It catalyses the reaction S-sulfanyl-L-cysteinyl-[protein] + uridine(34) in tRNA + AH2 + ATP = 2-thiouridine(34) in tRNA + L-cysteinyl-[protein] + A + AMP + diphosphate + H(+). Its function is as follows. Catalyzes the 2-thiolation of uridine at the wobble position (U34) of tRNA(Lys), tRNA(Glu) and tRNA(Gln), leading to the formation of s(2)U34, the first step of tRNA-mnm(5)s(2)U34 synthesis. Sulfur is provided by IscS, via a sulfur-relay system. Binds ATP and its substrate tRNAs. In Escherichia coli O157:H7, this protein is tRNA-specific 2-thiouridylase MnmA.